The following is a 456-amino-acid chain: Kynurenine 3-monooxygenase (456 aa).

It belongs to the aromatic-ring hydroxylase family. KMO subfamily. Requires FAD as cofactor.

The catalysed reaction is L-kynurenine + NADPH + O2 + H(+) = 3-hydroxy-L-kynurenine + NADP(+) + H2O. Its pathway is cofactor biosynthesis; NAD(+) biosynthesis; quinolinate from L-kynurenine: step 1/3. Functionally, catalyzes the hydroxylation of L-kynurenine (L-Kyn) to form 3-hydroxy-L-kynurenine (L-3OHKyn). Required for synthesis of quinolinic acid. This is Kynurenine 3-monooxygenase from Xanthomonas campestris pv. campestris (strain B100).